We begin with the raw amino-acid sequence, 431 residues long: MLDPKYLRSDIAEAAARLATRGYVLDVAAVNALEEKRKDLQSRTQELQAERNARSKSIGEAARRGEDVAPLKAEVTKINEELETSKVELDALLAELKVIADAIPNLPSDTTPVGRDENDNVEVRRWGTPREFSFPVRDHIDLGEAAKGVDFKNGVKLSGSRFVVMKGQIARLHRALAQFMLDLHTLQHGYTECYVPYLVNPDSLYGTGQLPKFSQDLFNTGIDGEGEEEGKVRKFSLIPTSEVPLTNMARDEIFDEQELPIKMTAHSPCFRSEAGSYGRDTRGLIRMHQFDKVEMVQLVHPEKSWEALEEMAGHAEKVLQLLELPYRVMALSTGDMGFCAAKTYDLEVWLPAQNTYREISSVSNCTDFQARRMQARVRIDGKPQLLHTLNGSGLAVGRTLVAVIENYQQEDGRIAIPAALQSYMGGLTHIG.

The disordered stretch occupies residues 41-66; sequence QSRTQELQAERNARSKSIGEAARRGE. 240 to 242 contributes to the L-serine binding site; the sequence is TSE. 271 to 273 provides a ligand contact to ATP; it reads RSE. Glu-294 serves as a coordination point for L-serine. Residue 358-361 coordinates ATP; it reads EISS. Ser-392 is a binding site for L-serine.

The protein belongs to the class-II aminoacyl-tRNA synthetase family. Type-1 seryl-tRNA synthetase subfamily. Homodimer. The tRNA molecule binds across the dimer.

The protein resides in the cytoplasm. The catalysed reaction is tRNA(Ser) + L-serine + ATP = L-seryl-tRNA(Ser) + AMP + diphosphate + H(+). It catalyses the reaction tRNA(Sec) + L-serine + ATP = L-seryl-tRNA(Sec) + AMP + diphosphate + H(+). The protein operates within aminoacyl-tRNA biosynthesis; selenocysteinyl-tRNA(Sec) biosynthesis; L-seryl-tRNA(Sec) from L-serine and tRNA(Sec): step 1/1. In terms of biological role, catalyzes the attachment of serine to tRNA(Ser). Is also able to aminoacylate tRNA(Sec) with serine, to form the misacylated tRNA L-seryl-tRNA(Sec), which will be further converted into selenocysteinyl-tRNA(Sec). The polypeptide is Serine--tRNA ligase (Aeromonas hydrophila subsp. hydrophila (strain ATCC 7966 / DSM 30187 / BCRC 13018 / CCUG 14551 / JCM 1027 / KCTC 2358 / NCIMB 9240 / NCTC 8049)).